Reading from the N-terminus, the 185-residue chain is Large ribosomal subunit protein uL18 (185 aa).

Belongs to the universal ribosomal protein uL18 family. As to quaternary structure, part of the 50S ribosomal subunit. Contacts the 5S and 23S rRNAs.

Its function is as follows. This is one of the proteins that bind and probably mediate the attachment of the 5S RNA into the large ribosomal subunit, where it forms part of the central protuberance. In Halorubrum lacusprofundi (strain ATCC 49239 / DSM 5036 / JCM 8891 / ACAM 34), this protein is Large ribosomal subunit protein uL18.